Reading from the N-terminus, the 427-residue chain is Serine hydroxymethyltransferase (427 aa).

Residues Leu122 and 126 to 128 (GHL) contribute to the (6S)-5,6,7,8-tetrahydrofolate site. Lys231 is modified (N6-(pyridoxal phosphate)lysine). 355–357 (SPF) is a (6S)-5,6,7,8-tetrahydrofolate binding site.

Belongs to the SHMT family. In terms of assembly, homodimer. Pyridoxal 5'-phosphate is required as a cofactor.

The protein localises to the cytoplasm. It carries out the reaction (6R)-5,10-methylene-5,6,7,8-tetrahydrofolate + glycine + H2O = (6S)-5,6,7,8-tetrahydrofolate + L-serine. Its pathway is one-carbon metabolism; tetrahydrofolate interconversion. It functions in the pathway amino-acid biosynthesis; glycine biosynthesis; glycine from L-serine: step 1/1. Catalyzes the reversible interconversion of serine and glycine with tetrahydrofolate (THF) serving as the one-carbon carrier. This reaction serves as the major source of one-carbon groups required for the biosynthesis of purines, thymidylate, methionine, and other important biomolecules. Also exhibits THF-independent aldolase activity toward beta-hydroxyamino acids, producing glycine and aldehydes, via a retro-aldol mechanism. The sequence is that of Serine hydroxymethyltransferase from Nostoc sp. (strain PCC 7120 / SAG 25.82 / UTEX 2576).